A 138-amino-acid polypeptide reads, in one-letter code: Phosphoribosyl-AMP cyclohydrolase (138 aa).

The interval 1-23 (MSEQSAPSPTPAAELSSDPASPL) is disordered. Residue Asp-100 coordinates Mg(2+). Cys-101 lines the Zn(2+) pocket. Positions 102 and 104 each coordinate Mg(2+). 2 residues coordinate Zn(2+): Cys-117 and Cys-124.

The protein belongs to the PRA-CH family. Homodimer. Mg(2+) is required as a cofactor. The cofactor is Zn(2+).

It localises to the cytoplasm. It catalyses the reaction 1-(5-phospho-beta-D-ribosyl)-5'-AMP + H2O = 1-(5-phospho-beta-D-ribosyl)-5-[(5-phospho-beta-D-ribosylamino)methylideneamino]imidazole-4-carboxamide. It participates in amino-acid biosynthesis; L-histidine biosynthesis; L-histidine from 5-phospho-alpha-D-ribose 1-diphosphate: step 3/9. In terms of biological role, catalyzes the hydrolysis of the adenine ring of phosphoribosyl-AMP. The protein is Phosphoribosyl-AMP cyclohydrolase of Paenarthrobacter aurescens (strain TC1).